Reading from the N-terminus, the 570-residue chain is Sulfite reductase [NADPH] hemoprotein beta-component (570 aa).

[4Fe-4S] cluster is bound by residues C434, C440, C479, and C483. Siroheme is bound at residue C483.

Belongs to the nitrite and sulfite reductase 4Fe-4S domain family. In terms of assembly, alpha(8)-beta(8). The alpha component is a flavoprotein, the beta component is a hemoprotein. It depends on siroheme as a cofactor. [4Fe-4S] cluster serves as cofactor.

It catalyses the reaction hydrogen sulfide + 3 NADP(+) + 3 H2O = sulfite + 3 NADPH + 4 H(+). It participates in sulfur metabolism; hydrogen sulfide biosynthesis; hydrogen sulfide from sulfite (NADPH route): step 1/1. Functionally, component of the sulfite reductase complex that catalyzes the 6-electron reduction of sulfite to sulfide. This is one of several activities required for the biosynthesis of L-cysteine from sulfate. This is Sulfite reductase [NADPH] hemoprotein beta-component from Shigella dysenteriae serotype 1 (strain Sd197).